We begin with the raw amino-acid sequence, 366 residues long: MALCQTSVLKVYHAVIEDVITNVRDAFLDEGVDEQVLQEMKQVWRNKLLASKAVELSPDSGDGSHPPPIVANNPKSHKAANAKAKKAAAATAVTSHQHIGGNSSMSSLVGLKSSAGMAAGSGIRNGLVPIKQEVNSQNPPPLHPTSAASMMQKQQQAASSGQGSIPIVATLDPNRIMPVNITLPSPAGSASSESRVLTIQVPASALQENQLTQILTAHLISSIMSLPTTLASSVLQQHVNAALSSANHQKTLAAAKQLDGALDSSDEDESEESDDNIDNDDDDDLDKDDDEDAEHEDAAEEEPLNSEDDVTDEDSAEMFDTDNVIVCQYDKITRSRNKWKFYLKDGIMNMRGKDYVFQKSNGDAEW.

Disordered regions lie at residues 56–82, 133–162, and 257–317; these read LSPD…AANA, EVNS…SSGQ, and QLDG…DSAE. The span at 146–162 shows a compositional bias: low complexity; sequence SAASMMQKQQQAASSGQ. The segment covering 264–317 has biased composition (acidic residues); it reads SSDEDESEESDDNIDNDDDDDLDKDDDEDAEHEDAAEEEPLNSEDDVTDEDSAE. A phosphoserine; by TAF1 mark is found at S265 and S306.

The protein belongs to the TFIIA subunit 1 family. Belongs to the TFIID complex which is composed of TATA binding protein (Tbp) and a number of TBP-associated factors (Tafs). TFIIA is a heterodimer of a unprocessed large subunit 1 and a small subunit gamma. It was originally believed to be a heterotrimer of an alpha (p30), a beta (p20) and a gamma subunit (p14). Interacts with Tbp. Taf4 interacts with TFIIA-L when TFIIA-L is in complex with Tbp. The precursor form (48 kDa) is cleaved to give rise to the alpha (30 kDa) and beta (20 kDa) subunits.

The protein localises to the nucleus. In terms of biological role, TFIIA is a component of the transcription machinery of RNA polymerase II and plays an important role in transcriptional activation. TFIIA in a complex with TBP mediates transcriptional activity. The polypeptide is Transcription initiation factor IIA subunit 1 (TfIIA-L) (Drosophila melanogaster (Fruit fly)).